We begin with the raw amino-acid sequence, 63 residues long: Cecropin-2 (63 aa).

The first 23 residues, 1-23 (MNFYKVFIFVALILAISLGQSEA), serve as a signal peptide directing secretion. Residue arginine 62 is modified to Arginine amide.

The protein belongs to the cecropin family.

It is found in the secreted. Functionally, cecropins have lytic and antibacterial activity against several Gram-positive and Gram-negative bacteria. The chain is Cecropin-2 (Cec2A) from Drosophila virilis (Fruit fly).